Reading from the N-terminus, the 214-residue chain is MNQSLLSQFGTSEERVKRAIEAFKRGNGVLVLDDEDRENEGDLIFPAETITVEQMAKLIRYGSGIVCLCITDELCQQLDLPPMVQNNTSINQTAFTVSIEAAQGVSTGVSAQDRVTTIQVAIADNAKPQDLSRPGHVFPLRAKKGGVLARRGHTEAAVDLASWAGHKPAGVICEITNDDGSMARTLEIVEFGKKFNYPVVTIEDLVRYSSSKVV.

D-ribulose 5-phosphate contacts are provided by residues 37 to 38 (RE), Asp42, 150 to 154 (RRGHT), and Glu174. Glu38 lines the Mg(2+) pocket. His153 provides a ligand contact to Mg(2+).

This sequence belongs to the DHBP synthase family. As to quaternary structure, homodimer. The cofactor is Mg(2+). It depends on Mn(2+) as a cofactor.

It carries out the reaction D-ribulose 5-phosphate = (2S)-2-hydroxy-3-oxobutyl phosphate + formate + H(+). The protein operates within cofactor biosynthesis; riboflavin biosynthesis; 2-hydroxy-3-oxobutyl phosphate from D-ribulose 5-phosphate: step 1/1. In terms of biological role, catalyzes the conversion of D-ribulose 5-phosphate to formate and 3,4-dihydroxy-2-butanone 4-phosphate. The sequence is that of 3,4-dihydroxy-2-butanone 4-phosphate synthase from Histophilus somni (strain 2336) (Haemophilus somnus).